The primary structure comprises 390 residues: tRNA-specific 2-thiouridylase MnmA (390 aa).

ATP-binding positions include alanine 20–serine 27 and leucine 46. Residue cysteine 114 is the Nucleophile of the active site. Cysteine 114 and cysteine 211 are oxidised to a cystine. Glycine 138 is a binding site for ATP. The interval arginine 161 to glutamine 163 is interaction with tRNA. Cysteine 211 (cysteine persulfide intermediate) is an active-site residue.

The protein belongs to the MnmA/TRMU family.

The protein resides in the cytoplasm. The enzyme catalyses S-sulfanyl-L-cysteinyl-[protein] + uridine(34) in tRNA + AH2 + ATP = 2-thiouridine(34) in tRNA + L-cysteinyl-[protein] + A + AMP + diphosphate + H(+). Functionally, catalyzes the 2-thiolation of uridine at the wobble position (U34) of tRNA, leading to the formation of s(2)U34. The chain is tRNA-specific 2-thiouridylase MnmA from Azorhizobium caulinodans (strain ATCC 43989 / DSM 5975 / JCM 20966 / LMG 6465 / NBRC 14845 / NCIMB 13405 / ORS 571).